We begin with the raw amino-acid sequence, 348 residues long: MNRTDELRTARIESLVTPAELALRYPVTPGVATHVTDSRRRIEKILNGEDKRLLVIIGPCSIHDLTAAMEYATRLQSLRNQYQSRLEIVMRTYFEKPRTVVGWKGLISDPDLNGSYRVNHGLELARKLLLQVNELGVPTATEFLDMVTGQFIADLISWGAIGARTTESQIHREMASALSCPVGFKNGTDGNTRIAVDAIRAARASHMFLSPDKNGQMTIYQTSGNPYGHIIMRGGKKPNYHADDIAAACDTLHEFDLPEHLVVDFSHGNCQKQHRRQLEVCEDICQQIRNGSTEIAGIMAESFLREGTQKIVGGQPLTYGQSITDPCLGWEDTERLVEKLAFAVDTRF.

It belongs to the class-I DAHP synthase family.

The enzyme catalyses D-erythrose 4-phosphate + phosphoenolpyruvate + H2O = 7-phospho-2-dehydro-3-deoxy-D-arabino-heptonate + phosphate. It participates in metabolic intermediate biosynthesis; chorismate biosynthesis; chorismate from D-erythrose 4-phosphate and phosphoenolpyruvate: step 1/7. Functionally, stereospecific condensation of phosphoenolpyruvate (PEP) and D-erythrose-4-phosphate (E4P) giving rise to 3-deoxy-D-arabino-heptulosonate-7-phosphate (DAHP). The protein is Phospho-2-dehydro-3-deoxyheptonate aldolase, Trp-sensitive (aroH) of Shigella flexneri.